The following is an 89-amino-acid chain: Small ribosomal subunit protein uS15 (89 aa).

Belongs to the universal ribosomal protein uS15 family. In terms of assembly, part of the 30S ribosomal subunit. Forms a bridge to the 50S subunit in the 70S ribosome, contacting the 23S rRNA.

In terms of biological role, one of the primary rRNA binding proteins, it binds directly to 16S rRNA where it helps nucleate assembly of the platform of the 30S subunit by binding and bridging several RNA helices of the 16S rRNA. Functionally, forms an intersubunit bridge (bridge B4) with the 23S rRNA of the 50S subunit in the ribosome. In Mannheimia succiniciproducens (strain KCTC 0769BP / MBEL55E), this protein is Small ribosomal subunit protein uS15.